The sequence spans 242 residues: RNA polymerase sigma factor for flagellar operon (242 aa).

The Polymerase core binding signature appears at 55 to 68 (DMQQIGLIALVEAG). Residues 211 to 230 (LHEIALVLDLTPPRICQLHK) constitute a DNA-binding region (H-T-H motif).

It belongs to the sigma-70 factor family.

Its function is as follows. Sigma factors are initiation factors that promote the attachment of RNA polymerase to specific initiation sites and are then released. This alternative sigma factor is specific for the flagellin gene (fliC) expression. In Vibrio parahaemolyticus serotype O3:K6 (strain RIMD 2210633), this protein is RNA polymerase sigma factor for flagellar operon (lafS).